A 65-amino-acid chain; its full sequence is Large ribosomal subunit protein bL31 (65 aa).

Residues cysteine 16, cysteine 18, cysteine 36, and cysteine 39 each coordinate Zn(2+).

The protein belongs to the bacterial ribosomal protein bL31 family. Type A subfamily. Part of the 50S ribosomal subunit. Zn(2+) serves as cofactor.

Functionally, binds the 23S rRNA. The protein is Large ribosomal subunit protein bL31 of Alkaliphilus metalliredigens (strain QYMF).